The chain runs to 350 residues: (S)-tetrahydroprotoberberine N-methyltransferase (350 aa).

Ser-91, Gly-129, Asn-153, Gln-157, Asp-179, Val-180, and Val-195 together coordinate S-adenosyl-L-methionine. The active site involves Cys-325.

Belongs to the CFA/CMAS family. As to quaternary structure, homodimer.

It localises to the cytoplasm. It catalyses the reaction (S)-stylopine + S-adenosyl-L-methionine = (S)-cis-N-methylstylopine + S-adenosyl-L-homocysteine. The catalysed reaction is (S)-tetrahydropalmatine + S-adenosyl-L-methionine = (S)-cis-N-methyltetrahydropalmatine + S-adenosyl-L-homocysteine. The enzyme catalyses (S)-canadine + S-adenosyl-L-methionine = (S)-cis-N-methylcanadine + S-adenosyl-L-homocysteine. It carries out the reaction (S)-scoulerine + S-adenosyl-L-methionine = (S)-cis-N-methylscoulerine + S-adenosyl-L-homocysteine. It functions in the pathway alkaloid biosynthesis. In terms of biological role, N-methyltransferase with a broad substrate range, accepting protoberberine alkaloids (R,S)-stylopine, (R,S)-nandinine and (R,S)-tetrahydropalmatine, and to a lesser extent (R,S)-canadine, (R,S)-tetrahydrogroenlandicine (cheilanthifoline) and (S)-scoulerine. This Eschscholzia californica (California poppy) protein is (S)-tetrahydroprotoberberine N-methyltransferase.